A 2155-amino-acid chain; its full sequence is Alpha-tectorin (2155 aa).

Residues 1 to 22 form the signal peptide; that stretch reads MNYSSFLRIWVSFIFALVQHQA. 8 N-linked (GlcNAc...) asparagine glycosylation sites follow: Asn-34, Asn-187, Asn-215, Asn-278, Asn-455, Asn-506, Asn-528, and Asn-560. The 155-residue stretch at 98-252 folds into the NIDO domain; sequence PFWADVHNGI…GRWAFKVDGK (155 aa). Residues 260–314 form the VWFC domain; that stretch reads CTSRGQFLRRGEVFWDDLNCTVKCRCLDFNNEIYCQEASCSPYEVCEPKGKFFYC. The VWFD 1 domain occupies 320-500; sequence STCVVFGEPH…RVYHADWKCD (181 aa). 2 disulfide bridges follow: Cys-322–Cys-461 and Cys-344–Cys-499. The region spanning 597–650 is the TIL 1 domain; sequence CPSFSHYSVCTSSCPDTCSDLTASRNCATPCTEGCECNQGFVLSTSQCVPLHKC. Residues Asn-670, Asn-687, Asn-813, Asn-843, Asn-855, Asn-898, Asn-920, Asn-931, and Asn-949 are each glycosylated (N-linked (GlcNAc...) asparagine). Residues 711–886 form the VWFD 2 domain; sequence TVCLLSQNQV…SWTTFEEICN (176 aa). Cys-713 and Cys-849 form a disulfide bridge. Residues 984 to 1036 form the TIL 2 domain; sequence CPENSHFEECITCTETCETLTLGPICVDSCSEGCQCDEGYALLGSQCVTRSEC. 3 N-linked (GlcNAc...) asparagine glycosylation sites follow: Asn-1048, Asn-1235, and Asn-1364. Residues 1098–1278 form the VWFD 3 domain; the sequence is ASCIVSGYGH…SWVKRDTFCQ (181 aa). 2 cysteine pairs are disulfide-bonded: Cys-1100–Cys-1241 and Cys-1122–Cys-1277. The region spanning 1372-1425 is the TIL 3 domain; that stretch reads CPPNSHYESCVSVCQPRCAAIRLKSDCSHYCVEGCHCDAGYVLNGKSCILPHSC. Residues 1485-1666 enclose the VWFD 4 domain; it reads SYCLAAGGGV…QKRPLAPSCN (182 aa). 7 disulfides stabilise this stretch: Cys-1487-Cys-1622, Cys-1509-Cys-1665, Cys-1717-Cys-1775, Cys-1741-Cys-1784, Cys-1786-Cys-1818, Cys-1806-Cys-1898, and Cys-1837-Cys-1857. N-linked (GlcNAc...) asparagine glycosylation is found at Asn-1538, Asn-1565, Asn-1756, Asn-1772, Asn-1794, Asn-1851, Asn-1864, Asn-1880, Asn-1920, and Asn-1939. The 255-residue stretch at 1805–2059 folds into the ZP domain; that stretch reads TCKAAQMEVS…YSCKITCPHN (255 aa). 3 disulfide bridges follow: Cys-1980/Cys-2040, Cys-2001/Cys-2056, and Cys-2045/Cys-2052. Asn-2091 is lipidated: GPI-anchor amidated asparagine. The propeptide at 2092–2155 is removed in mature form; the sequence is GGCEQICTSR…HFVYKSGTTS (64 aa).

As to quaternary structure, may form homomeric filament after self-association or heteromeric filament after association with beta-tectorin. Interacts with CEACAM16. In terms of processing, the presence of a hydrophobic C-terminus preceded by a potential cleavage site strongly suggests that tectorins are synthesized as glycosylphosphatidylinositol-linked, membrane-bound precursors. Tectorins are targeted to the apical surface of the inner ear epithelia by the lipid and proteolytically released into the extracellular compartment.

The protein resides in the cell membrane. Its subcellular location is the secreted. It localises to the extracellular space. It is found in the extracellular matrix. Functionally, one of the major non-collagenous components of the tectorial membrane. The tectorial membrane is an extracellular matrix of the inner ear that covers the neuroepithelium of the cochlea and contacts the stereocilia bundles of specialized sensory hair cells. Sound induces movement of these hair cells relative to the tectorial membrane, deflects the stereocilia and leads to fluctuations in hair-cell membrane potential, transducing sound into electrical signals. The polypeptide is Alpha-tectorin (TECTA) (Homo sapiens (Human)).